We begin with the raw amino-acid sequence, 574 residues long: Probable glucomannan 4-beta-mannosyltransferase 6 (574 aa).

The chain crosses the membrane as a helical span at residues 87–107 (VVACMVMSVIVLAEKVFLGVV). Asp-180 is an active-site residue. Asp-239 and Asp-241 together coordinate substrate. Asp-333 is an active-site residue. 4 consecutive transmembrane segments (helical) span residues 412 to 432 (IIST…KVFF), 437 to 457 (IPLW…SVGT), 523 to 543 (FHCL…YDYL), and 548 to 568 (IFYI…FEFM).

This sequence belongs to the glycosyltransferase 2 family. Plant cellulose synthase-like A subfamily.

The protein resides in the golgi apparatus membrane. It catalyses the reaction GDP-mannose + (glucomannan)n = GDP + (glucomannan)n+1.. In terms of biological role, probable mannan synthase which consists of a 4-beta-mannosyltransferase activity on mannan using GDP-mannose. The beta-1,4-mannan product is the backbone for galactomannan synthesis by galactomannan galactosyltransferase. Galactomannan is a noncellulosic polysaccharides of plant cell wall. This is Probable glucomannan 4-beta-mannosyltransferase 6 from Oryza sativa subsp. japonica (Rice).